The sequence spans 565 residues: DNA primase (565 aa).

A CHC2-type zinc finger spans residues 37–61 (CPFHSETNPSFYVHPGLKIYHCFGC). A Toprim domain is found at 248 to 329 (GFFVITEGYF…NVLVATPSPY (82 aa)). The Mg(2+) site is built by Glu-254, Asp-298, and Asp-300.

This sequence belongs to the DnaG primase family. As to quaternary structure, monomer. Interacts with DnaB. Requires Zn(2+) as cofactor. Mg(2+) serves as cofactor.

It catalyses the reaction ssDNA + n NTP = ssDNA/pppN(pN)n-1 hybrid + (n-1) diphosphate.. Functionally, RNA polymerase that catalyzes the synthesis of short RNA molecules used as primers for DNA polymerase during DNA replication. This is DNA primase from Thermotoga maritima (strain ATCC 43589 / DSM 3109 / JCM 10099 / NBRC 100826 / MSB8).